The following is a 206-amino-acid chain: MRTRVKFCGITRREDAIQAIRLGADAIGLVFYPESPRAVSPQQAYQIVRELPPFVTVVGLFVNAASCYLQQILDKVPIDILQFHGEESPEECGYYGRSYIKAIRMAEGVDLPSLARSYESASALLLDAYQAGVPGGTGRAFDWRRIPKNFSKAVILAGGLTPENIAQAVRQVRPYAVDVSGGVERIKGVKDAAKMAAFMRGVDSVN.

Belongs to the TrpF family.

The catalysed reaction is N-(5-phospho-beta-D-ribosyl)anthranilate = 1-(2-carboxyphenylamino)-1-deoxy-D-ribulose 5-phosphate. It functions in the pathway amino-acid biosynthesis; L-tryptophan biosynthesis; L-tryptophan from chorismate: step 3/5. The protein is N-(5'-phosphoribosyl)anthranilate isomerase of Nitrosococcus oceani (strain ATCC 19707 / BCRC 17464 / JCM 30415 / NCIMB 11848 / C-107).